The chain runs to 210 residues: Somatotropin (210 aa).

Residues 1-22 (MGQVFLLMPVLLVSCFLSQGAA) form the signal peptide. H38 is a binding site for Zn(2+). The cysteines at positions 71 and 183 are disulfide-linked. Position 192 (E192) interacts with Zn(2+). C200 and C208 are disulfide-bonded.

This sequence belongs to the somatotropin/prolactin family.

Its subcellular location is the secreted. Growth hormone plays an important role in growth control and is involved in the regulation of several anabolic processes. Implicated as an osmoregulatory substance important for seawater adaptation. This Salmo salar (Atlantic salmon) protein is Somatotropin (gh).